The sequence spans 397 residues: 8-amino-7-oxononanoate synthase (397 aa).

Arginine 23 contacts substrate. Pyridoxal 5'-phosphate is bound at residue glycine 110–tyrosine 111. Histidine 135 is a binding site for substrate. Pyridoxal 5'-phosphate contacts are provided by serine 181, histidine 209, and threonine 237. Position 240 is an N6-(pyridoxal phosphate)lysine (lysine 240). Threonine 354 contributes to the substrate binding site.

The protein belongs to the class-II pyridoxal-phosphate-dependent aminotransferase family. BioF subfamily. In terms of assembly, homodimer. Pyridoxal 5'-phosphate is required as a cofactor.

The catalysed reaction is 6-carboxyhexanoyl-[ACP] + L-alanine + H(+) = (8S)-8-amino-7-oxononanoate + holo-[ACP] + CO2. It functions in the pathway cofactor biosynthesis; biotin biosynthesis. Functionally, catalyzes the decarboxylative condensation of pimeloyl-[acyl-carrier protein] and L-alanine to produce 8-amino-7-oxononanoate (AON), [acyl-carrier protein], and carbon dioxide. The polypeptide is 8-amino-7-oxononanoate synthase (Anaeromyxobacter sp. (strain Fw109-5)).